The chain runs to 328 residues: C-type lectin domain family 11 member A (328 aa).

The signal sequence occupies residues 1-21 (MQAAWLLGALLVPHLLSFGHG). Residues 58–111 (PTGVGNKDNLAENSEGKEVWEATETQGEEEEEETTTTPSSSPTPFPSPSPTSED) form a disordered region. The 138-residue stretch at 188–325 (LGHKCFLLSR…CERRLYFVCE (138 aa)) folds into the C-type lectin domain. Intrachain disulfides connect C209/C324 and C301/C316.

O-glycosylated. Probably sulfated on the O-glycans.

It is found in the cytoplasm. It localises to the secreted. Promotes osteogenesis by stimulating the differentiation of mesenchymal progenitors into mature osteoblasts. Important for repair and maintenance of adult bone. In Rattus norvegicus (Rat), this protein is C-type lectin domain family 11 member A (Clec11a).